The following is a 217-amino-acid chain: Carboxylesterase Culp1 (217 aa).

The signal sequence occupies residues 1 to 32; sequence MTPRSLVRIVGVVVATTLALVSAPAGGRAAHA. The cysteines at positions 35 and 107 are disulfide-linked. The active-site Nucleophile is the S118. C177 and C184 form a disulfide bridge. The active site involves D181. H193 serves as the catalytic Proton donor/acceptor.

It belongs to the cutinase family.

Its subcellular location is the secreted. It catalyses the reaction a fatty acid ester + H2O = an aliphatic alcohol + a fatty acid + H(+). In terms of biological role, shows esterase activity, with a preference for short- and medium-chain fatty acids. The chain is Carboxylesterase Culp1 from Mycobacterium bovis (strain ATCC BAA-935 / AF2122/97).